A 66-amino-acid polypeptide reads, in one-letter code: Large ribosomal subunit protein bL33c (66 aa).

It belongs to the bacterial ribosomal protein bL33 family.

It is found in the plastid. It localises to the chloroplast. In Ceratophyllum demersum (Rigid hornwort), this protein is Large ribosomal subunit protein bL33c.